The chain runs to 301 residues: DNA repair protein RecO (301 aa).

The interval 272 to 301 is disordered; sequence PTPSGQGSPVAAAAFSEEDSETLGSNLKKL.

This sequence belongs to the RecO family.

Its function is as follows. Involved in DNA repair and RecF pathway recombination. This Synechococcus sp. (strain JA-3-3Ab) (Cyanobacteria bacterium Yellowstone A-Prime) protein is DNA repair protein RecO.